The sequence spans 111 residues: Flagellar hook-basal body complex protein FliE (111 aa).

It belongs to the FliE family.

The protein localises to the bacterial flagellum basal body. The sequence is that of Flagellar hook-basal body complex protein FliE from Sinorhizobium fredii (strain NBRC 101917 / NGR234).